We begin with the raw amino-acid sequence, 312 residues long: Glyoxylate/hydroxypyruvate reductase A (312 aa).

Residue arginine 227 is part of the active site. Histidine 275 acts as the Proton donor in catalysis.

This sequence belongs to the D-isomer specific 2-hydroxyacid dehydrogenase family. GhrA subfamily.

The protein localises to the cytoplasm. It carries out the reaction glycolate + NADP(+) = glyoxylate + NADPH + H(+). The enzyme catalyses (R)-glycerate + NAD(+) = 3-hydroxypyruvate + NADH + H(+). It catalyses the reaction (R)-glycerate + NADP(+) = 3-hydroxypyruvate + NADPH + H(+). In terms of biological role, catalyzes the NADPH-dependent reduction of glyoxylate and hydroxypyruvate into glycolate and glycerate, respectively. The chain is Glyoxylate/hydroxypyruvate reductase A from Escherichia coli O7:K1 (strain IAI39 / ExPEC).